Reading from the N-terminus, the 460-residue chain is Ammonium transporter Rh type B-B (460 aa).

Topologically, residues 1 to 10 (MTSYSTNMRI) are cytoplasmic. A helical transmembrane segment spans residues 11–31 (KLPLFCLLLQFITIILFAVFV). Residues 32-62 (RYDHESDARGWHEELNNHSSSNADNDFYYRY) are Extracellular-facing. Asn-48 is a glycosylation site (N-linked (GlcNAc...) asparagine). The helical transmembrane segment at 63-83 (PSFQDVHVMIFIGFGFLMTFL) threads the bilayer. Residues 84–87 (KRYG) lie on the Cytoplasmic side of the membrane. A helical membrane pass occupies residues 88-108 (FSSVAFNFLIAAFGLQWSTLI). The Extracellular segment spans residues 109-125 (QGFFHGFHDGKIHVGIE). The helical transmembrane segment at 126-146 (SMINADFCTGAVLISFGAVLG) threads the bilayer. The Cytoplasmic segment spans residues 147–150 (KTSP). The helical transmembrane segment at 151–171 (VQLIIMTLVEVTLFGINEYII) threads the bilayer. Over 172–179 (LNIVGAKD) the chain is Extracellular. Residues 180-202 (AGGSMTIHTFGAYFGLIVSRVLY) traverse the membrane as a helical segment. Residues 203 to 220 (REDLEKSRQREGSVYHSD) are Cytoplasmic-facing. Residues 221–241 (LFAMIGTIYLWMFWPSFNSAV) traverse the membrane as a helical segment. The Extracellular segment spans residues 242–252 (TAHGDDQHRTV). A helical membrane pass occupies residues 253–273 (MNTYYSLAACTLATFGFSALL). Residues 274-283 (NGEGKLDMVH) lie on the Cytoplasmic side of the membrane. A helical membrane pass occupies residues 284–304 (IQNAALAGGVAVGTSGEMMLT). Residue Pro-305 is a topological domain, extracellular. Residues 306 to 326 (FGAMIAGTLAGMISVLGYKYL) traverse the membrane as a helical segment. Topologically, residues 327 to 347 (TPVLDSKLKIQDTCGVHNLHG) are cytoplasmic. The helical transmembrane segment at 348 to 368 (MPGILGAIIGAIVALFATADI) threads the bilayer. The Extracellular portion of the chain corresponds to 369-394 (YGDGMGDVFPLISDGSRTAKQQSLYQ). Residues 395–415 (FLALLVALGFAIIGGTVVGFI) form a helical membrane-spanning segment. Residues 416-460 (LKLPIFGTPSDAECFEDAIYWEVPGGEGHQQLTVVINNEDPDTQA) lie on the Cytoplasmic side of the membrane.

Belongs to the ammonium transporter (TC 2.A.49) family. Rh subfamily.

It localises to the basolateral cell membrane. The protein localises to the cytoplasmic vesicle membrane. Functionally, functions as a specific ammonium transporter. This is Ammonium transporter Rh type B-B (rhbg-b) from Xenopus laevis (African clawed frog).